Consider the following 345-residue polypeptide: Phosphoribosylformylglycinamidine cyclo-ligase (345 aa).

This sequence belongs to the AIR synthase family.

The protein localises to the cytoplasm. It catalyses the reaction 2-formamido-N(1)-(5-O-phospho-beta-D-ribosyl)acetamidine + ATP = 5-amino-1-(5-phospho-beta-D-ribosyl)imidazole + ADP + phosphate + H(+). It participates in purine metabolism; IMP biosynthesis via de novo pathway; 5-amino-1-(5-phospho-D-ribosyl)imidazole from N(2)-formyl-N(1)-(5-phospho-D-ribosyl)glycinamide: step 2/2. This Anaeromyxobacter dehalogenans (strain 2CP-C) protein is Phosphoribosylformylglycinamidine cyclo-ligase.